A 129-amino-acid chain; its full sequence is M-zodatoxin-Lt8c (129 aa).

A signal peptide spans 1-20; the sequence is MKYFVVALALVAAFACIAES. Residues 21-60 constitute a propeptide that is removed on maturation; that stretch reads KPAESEHELAEVEEENELADLEDAVWLEHLADLSDLEEAR. The short motif at 57 to 60 is the Processing quadruplet motif element; sequence EEAR.

Cleavage of the propeptide depends on the processing quadruplet motif (XXXR, with at least one of X being E). In terms of tissue distribution, expressed by the venom gland.

The protein localises to the secreted. Functionally, insecticidal, cytolytic and antimicrobial peptide. Forms voltage-dependent, ion-permeable channels in membranes. At high concentration causes cell membrane lysis. The chain is M-zodatoxin-Lt8c (cit 1-3) from Lachesana tarabaevi (Spider).